We begin with the raw amino-acid sequence, 208 residues long: MEMTKLFSYIVIKNVYYPQVSFGISANTFLLLFHIFTFAYTHRLKPIDMTISHLPLIHILLLFTQAILVSSDLFESWNIQNNDLKCKIITFLNRVMRGVSICTTCLLSVLQAITISPSTSFLEKFKHISANHTLGFILFSWVLNMFITNNLLLFIVPTPNRIGASLLFVTEHCYVLPMSYTHRSLFFILMVLRDVIFIGLMVLSSGYG.

At 1-19 (MEMTKLFSYIVIKNVYYPQ) the chain is on the extracellular side. Residues 20-40 (VSFGISANTFLLLFHIFTFAY) traverse the membrane as a helical segment. The Cytoplasmic portion of the chain corresponds to 41-48 (THRLKPID). The chain crosses the membrane as a helical span at residues 49–69 (MTISHLPLIHILLLFTQAILV). Residues 70-97 (SSDLFESWNIQNNDLKCKIITFLNRVMR) lie on the Extracellular side of the membrane. A disulfide bridge connects residues Cys86 and Cys173. Residues 98–118 (GVSICTTCLLSVLQAITISPS) traverse the membrane as a helical segment. Residues 119–135 (TSFLEKFKHISANHTLG) are Cytoplasmic-facing. The helical transmembrane segment at 136-156 (FILFSWVLNMFITNNLLLFIV) threads the bilayer. Residues 157–183 (PTPNRIGASLLFVTEHCYVLPMSYTHR) lie on the Extracellular side of the membrane. Residues 184–204 (SLFFILMVLRDVIFIGLMVLS) traverse the membrane as a helical segment. The Cytoplasmic portion of the chain corresponds to 205-208 (SGYG).

This sequence belongs to the G-protein coupled receptor 1 family. Expressed in olfactory nerve.

The protein resides in the cell membrane. Putative pheromone receptor. The chain is Putative vomeronasal receptor-like protein 4 (VN1R17P) from Homo sapiens (Human).